The chain runs to 73 residues: Plasticin-A1 (73 aa).

The N-terminal stretch at 1–22 is a signal peptide; sequence MAFLKKSLFLVLFLAIVPLSIC. A propeptide spanning residues 23 to 42 is cleaved from the precursor; the sequence is EEEKREEENEEKQEDDDQSE. Positions 25-45 are disordered; it reads EKREEENEEKQEDDDQSEKRG. A compositionally biased stretch (acidic residues) spans 30–40; the sequence is ENEEKQEDDDQ. G70 bears the Glycine amide mark. A propeptide spanning residues 72-73 is cleaved from the precursor; sequence ES.

The protein belongs to the frog skin active peptide (FSAP) family. Plasticin subfamily. Expressed by the skin glands.

It is found in the secreted. The protein resides in the target cell membrane. Its function is as follows. Peptide with no antimicrobial activity. May act in synergy with cationic peptides by enhancing their activity. Has a moderate hemolytic activity. This chain is Plasticin-A1, found in Agalychnis annae (Blue-sided leaf frog).